Reading from the N-terminus, the 106-residue chain is Programmed cell death activator egl-1 (106 aa).

Positions 73 to 81 (LAAMCDDFD) are BH3-like.

Interacts with ced-9; the interaction results in ced-4 release from the ced-4/ced-9 complex. Interaction with ced-9 may enhance interaction of ced-9 with drp-1, but not with ced-4. A ced-9/egl-1 complex may recruit drp-1 to the mitochondrial surface.

The protein resides in the synapse. Functionally, plays a major role in programmed cell death (PCD or apoptosis) by negatively regulating ced-9. Binds to and directly inhibits the activity of ced-9, releasing the cell death activator ced-4 from a ced-9/ced-4 containing protein complex and allowing ced-4 to activate the cell-killing caspase ced-3. Required to activate programmed cell death in the sister cells of the serotonergic neurosecretory motor (NSM) neurons during embryogenesis. Required to activate programmed cell death in the sister cells of the M4 motor neuron and I1 pharyngeal neuron during embryogenesis. During larval development, required for the elimination of transient presynaptic components upstream of ced-9, ced-4 and ced-3 apoptotic pathway. Together with ain-1, a component of the miRNA-induced-silencing complex (miRISC), and probably upstream of ced-3 and ced-4, regulates temporal cell fate patterning during larval development. Has been shown in two studies to be dispensable in mitochondrial dynamics and morphology during early embryonic development. However, one study shows that during larval development, egl-1 is involved in modulating mitochondrial dynamics, perhaps acting by stabilizing the interaction between ced-9 and drp-1 in order to promote mitochondrial fission. Involved in inducing mitochondrial fragmentation during apoptosis, probably acting via ced-9 and dynamin-related protein drp-1. This is Programmed cell death activator egl-1 from Caenorhabditis elegans.